We begin with the raw amino-acid sequence, 208 residues long: MAVYAVDHPLVKHKLGRLRQSDVPVAEFRALSNEVCRLLTYEATKDLETEKTQVEGWAGPVEVEQIKGKKITVVPILRAGLGMLDGLLDMIPGAKVSVVGMFRNEETLEPVTYYTKLANNIEERQAIIIDPMLATGGTLVATIDLLKKAGCKQIRGLFLVAAPEGIKRVQDAHPDVDIYVAAVDDCLNENGYILPGLGDAGDKIFGTK.

5-phospho-alpha-D-ribose 1-diphosphate contacts are provided by residues Arg78, Arg103, and 130–138 (DPMLATGGT). Residues Ile193 and 198–200 (GDA) each bind uracil. A 5-phospho-alpha-D-ribose 1-diphosphate-binding site is contributed by Asp199.

The protein belongs to the UPRTase family. Requires Mg(2+) as cofactor.

The enzyme catalyses UMP + diphosphate = 5-phospho-alpha-D-ribose 1-diphosphate + uracil. It participates in pyrimidine metabolism; UMP biosynthesis via salvage pathway; UMP from uracil: step 1/1. Its activity is regulated as follows. Allosterically activated by GTP. Catalyzes the conversion of uracil and 5-phospho-alpha-D-ribose 1-diphosphate (PRPP) to UMP and diphosphate. This chain is Uracil phosphoribosyltransferase, found in Oleidesulfovibrio alaskensis (strain ATCC BAA-1058 / DSM 17464 / G20) (Desulfovibrio alaskensis).